Reading from the N-terminus, the 437-residue chain is (S)-6-hydroxynicotine oxidase (437 aa).

FAD-binding positions include serine 16, 35–37 (EAR), arginine 43, 57–60 (GGAG), valine 231, serine 405, and 413–415 (EYI).

The protein belongs to the flavin monoamine oxidase family. In terms of assembly, homodimer. The cofactor is FAD.

It catalyses the reaction (S)-6-hydroxynicotine + O2 + H2O = 6-hydroxypseudooxynicotine + H2O2. The catalysed reaction is (S)-6-hydroxynicotine + O2 = 6-hydroxy-N-methylmyosmine + H2O2. The protein operates within alkaloid degradation; nicotine degradation; 6-hydroxypseudooxynicotine from nicotine (S-isomer route): step 2/2. With respect to regulation, partially inhibited by Co(2+) or Zn(2+) and significantly inhibited by Ag(+), Cu(2+) and Hg(2+). Functionally, involved in the degradation of L-nicotine. Catalyzes the oxidation of (S)-6-hydroxynicotine (6-hydroxy-L-nicotine) to 6-hydroxypseudooxynicotine. Oxidation of the pyrrolidine ring of (S)-6-hydroxynicotine leads to the formation of the optically inactive 6-hydroxy-N-methylmyosmine, which hydrolyzes spontaneously to 6-hydroxypseudooxynicotine. Acts with absolute stereospecificity on the L-form of 6-hydroxynicotine. Also involved in the degradation of nornicotine, and catalyzes the oxidation of 6-hydroxynornicotine to 6-hydroxymyosmine, which hydrolyzes to 6-hydroxypseudooxynornicotine. In vitro, converts (S)-nicotine into N-methylmyosmine, which spontaneously hydrolyzes spontaneously into pseudooxynicotine, but catalytic efficiency is about 1900-fold higher with (S)-6-hydroxynicotine. The sequence is that of (S)-6-hydroxynicotine oxidase from Shinella sp. (strain HZN7).